The primary structure comprises 74 residues: Ubiquitin-like protein FUBI (74 aa).

This sequence belongs to the ubiquitin family.

This is Ubiquitin-like protein FUBI (Fau) from Rattus norvegicus (Rat).